The following is a 318-amino-acid chain: Thioredoxin reductase (318 aa).

Residue 36-43 (TGMQQGGQ) participates in FAD binding. A disulfide bond links cysteine 136 and cysteine 139. Position 286 to 295 (286 to 295 (DVMDHNYRQA)) interacts with FAD.

Belongs to the class-II pyridine nucleotide-disulfide oxidoreductase family. In terms of assembly, homodimer. It depends on FAD as a cofactor.

The protein localises to the cytoplasm. It carries out the reaction [thioredoxin]-dithiol + NADP(+) = [thioredoxin]-disulfide + NADPH + H(+). In Vibrio cholerae serotype O1 (strain ATCC 39315 / El Tor Inaba N16961), this protein is Thioredoxin reductase (trxB).